We begin with the raw amino-acid sequence, 260 residues long: MKGISRMSIREVSEVLNTEPSEEFLKACAQDERLGIQNLIVRYYKEWEARLVEAERIEALLREEKQLWLNGYLHIAGIDEAGRGPLAGPVVAATCILPAKFNLPGLNDSKKLTESKREKLFQQIKEQAIGYAVGSAEPAEIDGLNILQATKLAMKRAVEGLKVRPHFLLIDALELPSLKIPQKGIIDGDALSASIAAASILAKVSRDHLMGELDKLYPEYGFAKNKGYGTREHLMALRRCGVSPIHRRSFAPVQQQLDIV.

The RNase H type-2 domain occupies 73–260 (LHIAGIDEAG…APVQQQLDIV (188 aa)). A divalent metal cation is bound by residues Asp-79, Glu-80, and Asp-171.

This sequence belongs to the RNase HII family. The cofactor is Mn(2+). It depends on Mg(2+) as a cofactor.

The protein resides in the cytoplasm. It catalyses the reaction Endonucleolytic cleavage to 5'-phosphomonoester.. In terms of biological role, endonuclease that specifically degrades the RNA of RNA-DNA hybrids. The polypeptide is Ribonuclease HII (Desulfitobacterium hafniense (strain Y51)).